Reading from the N-terminus, the 188-residue chain is Elongation factor P (188 aa).

Lys34 is subject to N6-(3,6-diaminohexanoyl)-5-hydroxylysine.

The protein belongs to the elongation factor P family. May be beta-lysylated on the epsilon-amino group of Lys-34 by the combined action of EpmA and EpmB, and then hydroxylated on the C5 position of the same residue by EpmC (if this protein is present). Lysylation is critical for the stimulatory effect of EF-P on peptide-bond formation. The lysylation moiety may extend toward the peptidyltransferase center and stabilize the terminal 3-CCA end of the tRNA. Hydroxylation of the C5 position on Lys-34 may allow additional potential stabilizing hydrogen-bond interactions with the P-tRNA.

Its subcellular location is the cytoplasm. The protein operates within protein biosynthesis; polypeptide chain elongation. Involved in peptide bond synthesis. Alleviates ribosome stalling that occurs when 3 or more consecutive Pro residues or the sequence PPG is present in a protein, possibly by augmenting the peptidyl transferase activity of the ribosome. Modification of Lys-34 is required for alleviation. This chain is Elongation factor P, found in Xanthomonas axonopodis pv. citri (strain 306).